The primary structure comprises 141 residues: Ubiquitin-like protein ATG12 (141 aa).

Residues 1-53 (MSEDSEVVLQLPSAPVGAGGESLPELSPETATPEPPSSAAVSPGTEEPPGDTK) are disordered. Low complexity predominate over residues 23 to 40 (LPELSPETATPEPPSSAA). A Glycyl lysine isopeptide (Gly-Lys) (interchain with K-? in acceptor protein) cross-link involves residue glycine 141.

This sequence belongs to the ATG12 family. Forms a conjugate with ATG5. Part of the minor complex composed of 4 sets of ATG12-ATG5 and ATG16L1 (400 kDa); this complex interacts with ATG3 leading to disruption of ATG7 interaction and promotion of ATG8-like proteins lipidation. Forms an 800-kDa complex composed of ATG12-ATG5 and ATG16L2. Interacts with DHX58/RIG-1, IFIH1/MDA5 and MAVS/IPS-1 in monomeric form as well as in ATG12-ATG5 conjugate. The interaction with MAVS is further enhanced upon vesicular stomatitis virus (VSV) infection. Interacts with ATG3; this interaction is essential for phosphatidylethanolamine (PE)-conjugated ATG8-like proteins formation. Interacts with ATG7. Interacts with ATG10. The ATG12-ATG5 conjugate interacts with RAB33A; this interaction is bridged by ATG16L1 and promotes ATG12-ATG5-ATG16L1 complex recruitment to phagophores. Interacts with TECPR1. Interacts with SH3BGRL. The ATG12-ATG5 conjugate interacts with PDCD6IP (via the BRO1 domain); this interaction is bridged by ATG12 and promotes multiple PDCD6IP-mediated functions such as endolysosomal trafficking, macroautophagy and exosome biogenesis. In terms of processing, acetylated by EP300. As to expression, ubiquitous.

The protein resides in the cytoplasm. The protein localises to the preautophagosomal structure membrane. Ubiquitin-like protein involved in autophagy vesicles formation. Conjugation with ATG5 through a ubiquitin-like conjugating system involving also ATG7 as an E1-like activating enzyme and ATG10 as an E2-like conjugating enzyme, is essential for its function. The ATG12-ATG5 conjugate acts as an E3-like enzyme which is required for lipidation of ATG8 family proteins and their association to the vesicle membranes. As part of the ATG8 conjugation system with ATG5 and ATG16L1, required for recruitment of LRRK2 to stressed lysosomes and induction of LRRK2 kinase activity in response to lysosomal stress. Its function is as follows. (Microbial infection) May act as a proviral factor. In association with ATG5, negatively regulates the innate antiviral immune response by impairing the type I IFN production pathway upon vesicular stomatitis virus (VSV) infection. The sequence is that of Ubiquitin-like protein ATG12 from Mus musculus (Mouse).